A 279-amino-acid chain; its full sequence is NADPH-dependent 7-cyano-7-deazaguanine reductase (279 aa).

A substrate-binding site is contributed by 86 to 88; that stretch reads VES. 88–89 contacts NADPH; that stretch reads SK. Catalysis depends on Cys187, which acts as the Thioimide intermediate. Residue Asp194 is the Proton donor of the active site. Position 226 to 227 (226 to 227) interacts with substrate; that stretch reads HE. Residue 255 to 256 participates in NADPH binding; the sequence is RG.

Belongs to the GTP cyclohydrolase I family. QueF type 2 subfamily. Homodimer.

Its subcellular location is the cytoplasm. The catalysed reaction is 7-aminomethyl-7-carbaguanine + 2 NADP(+) = 7-cyano-7-deazaguanine + 2 NADPH + 3 H(+). It functions in the pathway tRNA modification; tRNA-queuosine biosynthesis. Catalyzes the NADPH-dependent reduction of 7-cyano-7-deazaguanine (preQ0) to 7-aminomethyl-7-deazaguanine (preQ1). The polypeptide is NADPH-dependent 7-cyano-7-deazaguanine reductase (Actinobacillus succinogenes (strain ATCC 55618 / DSM 22257 / CCUG 43843 / 130Z)).